A 138-amino-acid polypeptide reads, in one-letter code: Small ribosomal subunit protein uS11c (138 aa).

It belongs to the universal ribosomal protein uS11 family. As to quaternary structure, part of the 30S ribosomal subunit.

The protein resides in the plastid. It is found in the chloroplast. This is Small ribosomal subunit protein uS11c from Nandina domestica (Heavenly bamboo).